A 930-amino-acid chain; its full sequence is Dual serine/threonine and tyrosine protein kinase (930 aa).

The stretch at 383-428 (RKENELYESLMNIANRKQEEMKDMIIETLSNMKEELLEDAANMEFK) forms a coiled coil. A Protein kinase domain is found at 653–907 (PKLGRELGRG…PLLGIVQPML (255 aa)). ATP is bound by residues 659 to 667 (LGRGQYGVV) and lysine 682. Aspartate 778 functions as the Proton acceptor in the catalytic mechanism.

It belongs to the protein kinase superfamily. Ser/Thr protein kinase family. As to expression, widely expressed with the highest expression in brain and ovary.

The protein localises to the cytoplasm. It localises to the cell membrane. Its subcellular location is the apical cell membrane. It is found in the basolateral cell membrane. The protein resides in the cell junction. It carries out the reaction L-seryl-[protein] + ATP = O-phospho-L-seryl-[protein] + ADP + H(+). It catalyses the reaction L-threonyl-[protein] + ATP = O-phospho-L-threonyl-[protein] + ADP + H(+). The enzyme catalyses L-tyrosyl-[protein] + ATP = O-phospho-L-tyrosyl-[protein] + ADP + H(+). Functionally, may act as a positive regulator of ERK phosphorylation downstream of fibroblast growth factor-receptor activation. May induce both caspase-dependent apoptosis and caspase-independent cell death. The polypeptide is Dual serine/threonine and tyrosine protein kinase (DSTYK) (Gallus gallus (Chicken)).